A 213-amino-acid polypeptide reads, in one-letter code: GTP cyclohydrolase 1 (213 aa).

Zn(2+) contacts are provided by Cys-104, His-107, and Cys-175.

This sequence belongs to the GTP cyclohydrolase I family. As to quaternary structure, homomer.

The enzyme catalyses GTP + H2O = 7,8-dihydroneopterin 3'-triphosphate + formate + H(+). It functions in the pathway cofactor biosynthesis; 7,8-dihydroneopterin triphosphate biosynthesis; 7,8-dihydroneopterin triphosphate from GTP: step 1/1. The chain is GTP cyclohydrolase 1 from Brucella suis (strain ATCC 23445 / NCTC 10510).